Here is a 209-residue protein sequence, read N- to C-terminus: MLNAIKKNGLVLAIFACASTGLVAVTHYLTKDQIKQQEQAQLLSVLNQVIPHDLHDNELFSSCTLVQAEELGTEQAMPAYIAKINGEPSAIAIEAIAPDGYNGAIKVIVGMKIDGTILGTRVLSHQETPGLGDKIDLRVSDWILSFAGKQVTDSNLDRWKVRKDGGDFDQFTGATITPRAVVKSVKQAVQYVNQNNQALLAQPLNCGGE.

Residues 9–29 (GLVLAIFACASTGLVAVTHYL) traverse the membrane as a helical segment. Thr175 carries the post-translational modification FMN phosphoryl threonine.

The protein belongs to the RnfG family. The complex is composed of six subunits: RnfA, RnfB, RnfC, RnfD, RnfE and RnfG. The cofactor is FMN.

The protein resides in the cell inner membrane. Its function is as follows. Part of a membrane-bound complex that couples electron transfer with translocation of ions across the membrane. This is Ion-translocating oxidoreductase complex subunit G from Vibrio atlanticus (strain LGP32) (Vibrio splendidus (strain Mel32)).